Here is a 404-residue protein sequence, read N- to C-terminus: Ethanolamine-phosphate cytidylyltransferase (404 aa).

Residues Tyr-173–Gly-201 form a disordered region. A compositionally biased stretch (polar residues) spans Thr-189–Gly-201. Residues Ala-239–Phe-240, His-247–Phe-250, Lys-277, His-325–Thr-328, and Ser-354–Leu-358 each bind CTP. Ser-356 bears the Phosphoserine mark. Residues Thr-359 and Thr-360 each carry the phosphothreonine modification.

This sequence belongs to the cytidylyltransferase family.

It catalyses the reaction phosphoethanolamine + CTP + H(+) = CDP-ethanolamine + diphosphate. Its pathway is phospholipid metabolism; phosphatidylethanolamine biosynthesis; phosphatidylethanolamine from ethanolamine: step 2/3. Its function is as follows. Ethanolamine-phosphate cytidylyltransferase that catalyzes the second step in the synthesis of phosphatidylethanolamine (PE) from ethanolamine via the CDP-ethanolamine pathway. Phosphatidylethanolamine is a dominant inner-leaflet phospholipid in cell membranes, where it plays a role in membrane function by structurally stabilizing membrane-anchored proteins, and participates in important cellular processes such as cell division, cell fusion, blood coagulation, and apoptosis. The polypeptide is Ethanolamine-phosphate cytidylyltransferase (Pcyt2) (Mus musculus (Mouse)).